The chain runs to 385 residues: Beta sliding clamp (385 aa).

It belongs to the beta sliding clamp family. In terms of assembly, forms a ring-shaped head-to-tail homodimer around DNA which binds and tethers DNA polymerases and other proteins to the DNA. The DNA replisome complex has a single clamp-loading complex (3 tau and 1 each of delta, delta', psi and chi subunits) which binds 3 Pol III cores (1 core on the leading strand and 2 on the lagging strand) each with a beta sliding clamp dimer. Additional proteins in the replisome are other copies of gamma, psi and chi, Ssb, DNA helicase and RNA primase.

Its subcellular location is the cytoplasm. Confers DNA tethering and processivity to DNA polymerases and other proteins. Acts as a clamp, forming a ring around DNA (a reaction catalyzed by the clamp-loading complex) which diffuses in an ATP-independent manner freely and bidirectionally along dsDNA. Initially characterized for its ability to contact the catalytic subunit of DNA polymerase III (Pol III), a complex, multichain enzyme responsible for most of the replicative synthesis in bacteria; Pol III exhibits 3'-5' exonuclease proofreading activity. The beta chain is required for initiation of replication as well as for processivity of DNA replication. In Borreliella burgdorferi (strain ATCC 35210 / DSM 4680 / CIP 102532 / B31) (Borrelia burgdorferi), this protein is Beta sliding clamp (dnaN).